The chain runs to 81 residues: Acyl carrier protein (81 aa).

Residues 3–78 form the Carrier domain; it reads QEIFDKIKNI…EAVNIIAEKT (76 aa). An O-(pantetheine 4'-phosphoryl)serine modification is found at serine 38.

This sequence belongs to the acyl carrier protein (ACP) family. Post-translationally, 4'-phosphopantetheine is transferred from CoA to a specific serine of apo-ACP by AcpS. This modification is essential for activity because fatty acids are bound in thioester linkage to the sulfhydryl of the prosthetic group.

The protein resides in the cytoplasm. It participates in lipid metabolism; fatty acid biosynthesis. Functionally, carrier of the growing fatty acid chain in fatty acid biosynthesis. This chain is Acyl carrier protein, found in Picosynechococcus sp. (strain ATCC 27264 / PCC 7002 / PR-6) (Agmenellum quadruplicatum).